A 736-amino-acid polypeptide reads, in one-letter code: Elongation factor 2 (736 aa).

The 244-residue stretch at 18-261 folds into the tr-type G domain; sequence EQIRNIGITA…MVVKHIPNPR (244 aa). Residues 27–34, 93–97, and 147–150 contribute to the GTP site; these read AHVDHGKT, DTPGH, and NKID. Position 602 is a diphthamide (His-602).

The protein belongs to the TRAFAC class translation factor GTPase superfamily. Classic translation factor GTPase family. EF-G/EF-2 subfamily.

It localises to the cytoplasm. Catalyzes the GTP-dependent ribosomal translocation step during translation elongation. During this step, the ribosome changes from the pre-translocational (PRE) to the post-translocational (POST) state as the newly formed A-site-bound peptidyl-tRNA and P-site-bound deacylated tRNA move to the P and E sites, respectively. Catalyzes the coordinated movement of the two tRNA molecules, the mRNA and conformational changes in the ribosome. This is Elongation factor 2 from Desulfurococcus amylolyticus (strain DSM 18924 / JCM 16383 / VKM B-2413 / 1221n) (Desulfurococcus kamchatkensis).